The sequence spans 449 residues: Pectate lyase L (449 aa).

An N-terminal signal peptide occupies residues 1 to 26; it reads MFKRNDRSKNGFNALRLGVSFVLASS. Residue Cys-27 is the site of N-palmitoyl cysteine attachment. Residue Cys-27 is the site of S-diacylglycerol cysteine attachment. 7 PbH1 repeats span residues 158–179, 180–202, 213–242, 245–267, 274–308, 336–358, and 359–391; these read GDFWLVKGLEVKGAGDNGIYIG, GSNNRIENVETHHNRDTGLQLGR, PANNLILNSYSHDNADPDNGEDADGFAAKL, GSGNVFDNCLAAYNVDDGWDLYS, IGAVTILNSVAHHNGQTSDGTSTANSDGNGFKLGG, PGTITLTNNTSWDNGQSNFAFDK, and GEHVFINNLSFEGTASDKTSGTDQDNSNVWWKN. Ca(2+) contacts are provided by Asp-236, Asp-260, Asp-261, and Asp-264. Lys-305 (proton acceptor) is an active-site residue.

Belongs to the polysaccharide lyase 9 family. Ca(2+) is required as a cofactor.

It localises to the secreted. The enzyme catalyses Eliminative cleavage of (1-&gt;4)-alpha-D-galacturonan to give oligosaccharides with 4-deoxy-alpha-D-galact-4-enuronosyl groups at their non-reducing ends.. With respect to regulation, activated in presence of the surfactant polysorbate 20, while inhibited in the presence of polysorbate 40, polysorbate 60, polysorbate 80, Triton X-100 and sodium dodecyl sulfate. Inhibited by the metal chelator ethylenediaminetetraacetic acid (EDTA). Inhibited by iron and cobalt ions. Its function is as follows. Presents an endo-cleaving activity on the homogalacturonan (HG) region in pectin with a preference for low- or unmethylated pectin. This chain is Pectate lyase L, found in Paenibacillus polymyxa (strain SC2) (Bacillus polymyxa).